Consider the following 275-residue polypeptide: Probable histone chaperone asf-1 (275 aa).

Acidic residues-rich tracts occupy residues 157–166 (EDPVAEPVED), 183–207 (DGQE…EVDL), and 230–247 (KMED…DDEP). The tract at residues 157-275 (EDPVAEPVED…SDKTNNEMVQ (119 aa)) is disordered. Residues 265 to 275 (LSDKTNNEMVQ) are compositionally biased toward basic and acidic residues.

The protein belongs to the ASF1 family. Interacts with histone H3 and histone H4.

It localises to the nucleus. In terms of biological role, histone chaperone that facilitates histone deposition and histone exchange and removal during nucleosome assembly and disassembly. The protein is Probable histone chaperone asf-1 of Caenorhabditis elegans.